The primary structure comprises 168 residues: MPRSRINGNFIDKTSSIVANILLRIIPTTSGEKEAFTYYRDGMSAQSEGNYAEALQNYYEAMRPEIDPYDRSYILYNIGLIHTSNGEHTKALEYYFRALERNPFLPQASNNMAVICHYRGEEAIRQGDSEIAEAWFDQAAEYWKQAIALTPGNYIEAQNWLKITGRFE.

TPR repeat units lie at residues 35-68, 72-105, and 120-153; these read AFTY…EIDP, SYIL…NPFL, and GEEA…TPGN.

The protein belongs to the Ycf3 family.

It is found in the plastid. The protein localises to the chloroplast thylakoid membrane. In terms of biological role, essential for the assembly of the photosystem I (PSI) complex. May act as a chaperone-like factor to guide the assembly of the PSI subunits. The protein is Photosystem I assembly protein Ycf3 of Nuphar advena (Common spatterdock).